The primary structure comprises 234 residues: Protein XNDC1N (234 aa).

This is Protein XNDC1N from Homo sapiens (Human).